A 404-amino-acid chain; its full sequence is Cysteine desulfurase IscS (404 aa).

Residues 75–76 (AT), Asn-155, Gln-183, and 203–205 (SGH) contribute to the pyridoxal 5'-phosphate site. Lys-206 is modified (N6-(pyridoxal phosphate)lysine). Residue Thr-243 participates in pyridoxal 5'-phosphate binding. Cys-328 (cysteine persulfide intermediate) is an active-site residue. Cys-328 lines the [2Fe-2S] cluster pocket.

It belongs to the class-V pyridoxal-phosphate-dependent aminotransferase family. NifS/IscS subfamily. In terms of assembly, homodimer. Forms a heterotetramer with IscU, interacts with other sulfur acceptors. Pyridoxal 5'-phosphate serves as cofactor.

The protein localises to the cytoplasm. The enzyme catalyses (sulfur carrier)-H + L-cysteine = (sulfur carrier)-SH + L-alanine. It functions in the pathway cofactor biosynthesis; iron-sulfur cluster biosynthesis. Functionally, master enzyme that delivers sulfur to a number of partners involved in Fe-S cluster assembly, tRNA modification or cofactor biosynthesis. Catalyzes the removal of elemental sulfur atoms from cysteine to produce alanine. Functions as a sulfur delivery protein for Fe-S cluster synthesis onto IscU, an Fe-S scaffold assembly protein, as well as other S acceptor proteins. The sequence is that of Cysteine desulfurase IscS from Shewanella amazonensis (strain ATCC BAA-1098 / SB2B).